We begin with the raw amino-acid sequence, 627 residues long: Zinc cluster transcription factor acuM (627 aa).

6 disordered regions span residues 1-40 (MGCR…PARP), 129-148 (NGTA…GTME), 155-193 (AEGD…RRKV), 225-258 (CHDE…FSNA), 277-305 (PDGT…QNSL), and 394-416 (AQPS…PSST). Polar residues predominate over residues 162–171 (MESGSKNTAS). A DNA-binding region (zn(2)-C6 fungal-type) is located at residues 197–225 (CVYCRRSHMTCDSERPCTRCIKRNIGHLC). Residues 225–251 (CHDEPREPSKRARSEHEHSTAEEDGHS) are compositionally biased toward basic and acidic residues. Over residues 286-305 (SSVSAVQHNTIPSSSAQNSL) the composition is skewed to polar residues. Over residues 394 to 403 (AQPSQPTQSQ) the composition is skewed to low complexity. The span at 404 to 416 (PHQNDSVQGPSST) shows a compositional bias: polar residues.

It is found in the nucleus. Functionally, transcription factor that governs genes involved in reductive and siderophore-mediated iron acquisition, and carbon metabolism. Suppresses the expression of sreA and induces hapX to stimulate expression of genes involved in both reductive iron assimilation and siderophore-mediated iron uptake which is essential for the maximal virulence. Also regulates genes involved in gluconeogenesis. This Aspergillus fumigatus (strain ATCC MYA-4609 / CBS 101355 / FGSC A1100 / Af293) (Neosartorya fumigata) protein is Zinc cluster transcription factor acuM.